Consider the following 418-residue polypeptide: Tyrosine--tRNA ligase (418 aa).

Residue tyrosine 34 coordinates L-tyrosine. A 'HIGH' region motif is present at residues proline 39–histidine 48. Tyrosine 169 and glutamine 173 together coordinate L-tyrosine. The short motif at lysine 229 to serine 233 is the 'KMSKS' region element. Lysine 232 is a binding site for ATP. The 67-residue stretch at leucine 352–tyrosine 418 folds into the S4 RNA-binding domain.

Belongs to the class-I aminoacyl-tRNA synthetase family. TyrS type 1 subfamily. Homodimer.

It localises to the cytoplasm. It catalyses the reaction tRNA(Tyr) + L-tyrosine + ATP = L-tyrosyl-tRNA(Tyr) + AMP + diphosphate + H(+). Catalyzes the attachment of tyrosine to tRNA(Tyr) in a two-step reaction: tyrosine is first activated by ATP to form Tyr-AMP and then transferred to the acceptor end of tRNA(Tyr). This chain is Tyrosine--tRNA ligase, found in Streptococcus pyogenes serotype M18 (strain MGAS8232).